The following is a 320-amino-acid chain: Protease HtpX homolog (320 aa).

Helical transmembrane passes span 6 to 26 (TAML…LIGG) and 28 to 48 (AGMM…YWNS). His130 is a Zn(2+) binding site. Glu131 is an active-site residue. His134 provides a ligand contact to Zn(2+). Helical transmembrane passes span 145–165 (ITAT…FFGG) and 173–193 (PLGF…AMLV). Glu202 is a binding site for Zn(2+). The disordered stretch occupies residues 281–320 (GGMNVSTPPVRAANPSRKSRSVPDTGLGRGGSQPPKGPWS).

This sequence belongs to the peptidase M48B family. Zn(2+) is required as a cofactor.

Its subcellular location is the cell inner membrane. The protein is Protease HtpX homolog of Rhizobium leguminosarum bv. trifolii (strain WSM2304).